Consider the following 284-residue polypeptide: MDAIKKKMQAMKIEKDNAMDRADAAEEKARQQQERVEKLEEELRDTQKKMMQVENELDKAQEELTGANAQLEEKEKKVQEAEAEVAALNRRIQLLEEDFERAEERLIIATEKLGEASQTADESERVRKVMENRSLQDEERVYQLEAQLKEAQLLAEEADRKYDEVARKLAMVEADLERAEERAEAGENKIVELEEELRVVGNNLKSLEVSEEKALQREDSYEEQIRLLTQRLKEAETRAEFAERSVQKLQKEVDRLEDELVHEKEKYKAISEELDQTFQELSGY.

Positions 1-47 are disordered; the sequence is MDAIKKKMQAMKIEKDNAMDRADAAEEKARQQQERVEKLEEELRDTQ. A coiled-coil region spans residues 1 to 284; sequence MDAIKKKMQA…DQTFQELSGY (284 aa). Over residues 12–38 the composition is skewed to basic and acidic residues; the sequence is KIEKDNAMDRADAAEEKARQQQERVEK.

The protein belongs to the tropomyosin family.

Functionally, tropomyosin, in association with the troponin complex, plays a central role in the calcium dependent regulation of muscle contraction. The chain is Tropomyosin from Trichinella spiralis (Trichina worm).